Consider the following 574-residue polypeptide: MSSGIILLIVAIVLLVIIAYLIGVIIRKRNDSMIGTLEDRKQHLFGLPVNEEIEEVKELHLIGQSQTSFREWNQKWVDLTLNSFADIENHLFEAEKYNDTFNFIRAKHEINNVESQLNLVEEDITSIREALSILKEQEEKNSARVTHALDLYEKLQSSVAENDSHFGTTKPEIEKQMKNIETEFSQFVTLNSSGDPVEASEVLDRAEEHTIALGQITEQIPAIVAKLEDEFPDQLDDLESGYRRLLEDNYHFAENNIEEKFQEIREAIRSNASELVSLDLDRAREENSHIQERIDNMYALFEHEIKAFKVSAKHSKIIPSYLEHAKSNNDKLKEEMTRLSRKYILNENQASTVQGFEKEIEDVEKNVLELAKDFKGQEIPYSELQVVFEKNLKTLSAVESGQMEVFESIKNIENIEEDARKEADLYVTQLHMIKRFMEKRHLPGIPQDYLNVFFTTSTQLEALMDELSKGKINIEAVSRLRDVASASIANLEDYTYQVVENATLTEQLLQYSNRYRSFEAGVQNSFEIAMHLFEVEYDYQASFDEISYALETVEPGVTDRFVSSYERTREHIRF.

At 1 to 7 (MSSGIIL) the chain is on the extracellular side. A helical membrane pass occupies residues 8 to 26 (LIVAIVLLVIIAYLIGVII). The Cytoplasmic segment spans residues 27 to 574 (RKRNDSMIGT…YERTREHIRF (548 aa)). Coiled-coil stretches lie at residues 102–140 (NFIRAKHEINNVESQLNLVEEDITSIREALSILKEQEEK), 243–379 (RRLL…GQEI), and 459–520 (QLEA…SFEA).

The protein belongs to the EzrA family.

It localises to the cell membrane. Negative regulator of FtsZ ring formation; modulates the frequency and position of FtsZ ring formation. Inhibits FtsZ ring formation at polar sites. Interacts either with FtsZ or with one of its binding partners to promote depolymerization. The sequence is that of Septation ring formation regulator EzrA from Streptococcus uberis (strain ATCC BAA-854 / 0140J).